Reading from the N-terminus, the 71-residue chain is Small ribosomal subunit protein bS21 (71 aa).

It belongs to the bacterial ribosomal protein bS21 family.

The sequence is that of Small ribosomal subunit protein bS21 from Ruthia magnifica subsp. Calyptogena magnifica.